The following is a 207-amino-acid chain: Putative 3-methyladenine DNA glycosylase (207 aa).

The protein belongs to the DNA glycosylase MPG family.

The polypeptide is Putative 3-methyladenine DNA glycosylase (Listeria monocytogenes serotype 4b (strain CLIP80459)).